The primary structure comprises 290 residues: MKTMIGVIGGSGVYEIDGLEDAVWTKVETPWGDPSDEILTGRLDGVPMAFLPRHGRGHVHSPTTVPYRANIDALKRLGVTDLVSVSACGSFREEMAPGDFVIVDQFIDRSFARAKSFFGSGCVAHVSLAHPTCGRLSALCAEAARATGVTVHEGGTYLCMEGPQFSTLAESLLYKSWGCHVIGMTNMPEAKLAREAEICYASVAMVTDYDSWHPHHGEVDITAIIATLGTNADHARGLVAGLPARLGTERDLCPHGCDRALDHALMTAPAKRDPELLAKLDAVAGRVLKG.

Phosphate-binding positions include Ser-11, 53 to 54 (RH), and 86 to 87 (SA). Met-184 serves as a coordination point for substrate. A phosphate-binding site is contributed by Thr-185. Residue 208–210 (DYD) coordinates substrate.

Belongs to the PNP/MTAP phosphorylase family. MTAP subfamily. As to quaternary structure, homohexamer. Dimer of a homotrimer.

The enzyme catalyses S-methyl-5'-thioadenosine + phosphate = 5-(methylsulfanyl)-alpha-D-ribose 1-phosphate + adenine. It participates in amino-acid biosynthesis; L-methionine biosynthesis via salvage pathway; S-methyl-5-thio-alpha-D-ribose 1-phosphate from S-methyl-5'-thioadenosine (phosphorylase route): step 1/1. Functionally, catalyzes the reversible phosphorylation of S-methyl-5'-thioadenosine (MTA) to adenine and 5-methylthioribose-1-phosphate. Involved in the breakdown of MTA, a major by-product of polyamine biosynthesis. Responsible for the first step in the methionine salvage pathway after MTA has been generated from S-adenosylmethionine. Has broad substrate specificity with 6-aminopurine nucleosides as preferred substrates. The sequence is that of S-methyl-5'-thioadenosine phosphorylase from Cereibacter sphaeroides (strain ATCC 17023 / DSM 158 / JCM 6121 / CCUG 31486 / LMG 2827 / NBRC 12203 / NCIMB 8253 / ATH 2.4.1.) (Rhodobacter sphaeroides).